Reading from the N-terminus, the 733-residue chain is Polyribonucleotide nucleotidyltransferase (733 aa).

Mg(2+) is bound by residues Asp-488 and Asp-494. The 60-residue stretch at 555–614 folds into the KH domain; it reads PRIEVMNIAVDKIRDVIGTGGKVIREIVEQTGAKINIEDDGTIRIASADAKTIEAAKRWI. Residues 624-692 form the S1 motif domain; that stretch reads GVIYQGTVVK…ERGKVRLSMK (69 aa). A compositionally biased stretch (basic and acidic residues) spans 711–722; that stretch reads EQEKYTEETHKS. A disordered region spans residues 711–733; the sequence is EQEKYTEETHKSENKRRRKKKEE. Residues 723–733 show a composition bias toward basic residues; that stretch reads ENKRRRKKKEE.

Belongs to the polyribonucleotide nucleotidyltransferase family. It depends on Mg(2+) as a cofactor.

The protein localises to the cytoplasm. It carries out the reaction RNA(n+1) + phosphate = RNA(n) + a ribonucleoside 5'-diphosphate. Its function is as follows. Involved in mRNA degradation. Catalyzes the phosphorolysis of single-stranded polyribonucleotides processively in the 3'- to 5'-direction. This chain is Polyribonucleotide nucleotidyltransferase, found in Bartonella henselae (strain ATCC 49882 / DSM 28221 / CCUG 30454 / Houston 1) (Rochalimaea henselae).